Here is a 366-residue protein sequence, read N- to C-terminus: Chorismate synthase (366 aa).

Residues Arg-48 and Arg-54 each coordinate NADP(+). Residues 125–127 (RSS), 238–239 (NA), Gly-278, 293–297 (KPTSS), and Arg-319 contribute to the FMN site.

Belongs to the chorismate synthase family. Homotetramer. It depends on FMNH2 as a cofactor.

The enzyme catalyses 5-O-(1-carboxyvinyl)-3-phosphoshikimate = chorismate + phosphate. Its pathway is metabolic intermediate biosynthesis; chorismate biosynthesis; chorismate from D-erythrose 4-phosphate and phosphoenolpyruvate: step 7/7. Functionally, catalyzes the anti-1,4-elimination of the C-3 phosphate and the C-6 proR hydrogen from 5-enolpyruvylshikimate-3-phosphate (EPSP) to yield chorismate, which is the branch point compound that serves as the starting substrate for the three terminal pathways of aromatic amino acid biosynthesis. This reaction introduces a second double bond into the aromatic ring system. In Paraburkholderia phytofirmans (strain DSM 17436 / LMG 22146 / PsJN) (Burkholderia phytofirmans), this protein is Chorismate synthase.